The primary structure comprises 129 residues: Large ribosomal subunit protein bL12c (129 aa).

Residues 101–123 are compositionally biased toward basic and acidic residues; the sequence is KPIKEGMSKADAEAGKKQLEEAG. The interval 101–129 is disordered; the sequence is KPIKEGMSKADAEAGKKQLEEAGAKATLK.

Belongs to the bacterial ribosomal protein bL12 family. In terms of assembly, homodimer. Part of the ribosomal stalk of the 50S ribosomal subunit. Forms a multimeric L10(L12)X complex, where L10 forms an elongated spine to which 2 to 4 L12 dimers bind in a sequential fashion. Binds GTP-bound translation factors.

The protein resides in the plastid. Its subcellular location is the chloroplast. Its function is as follows. Forms part of the ribosomal stalk which helps the ribosome interact with GTP-bound translation factors. Is thus essential for accurate translation. This is Large ribosomal subunit protein bL12c from Guillardia theta (Cryptophyte).